The sequence spans 189 residues: GMP synthase [glutamine-hydrolyzing] subunit A (189 aa).

The 185-residue stretch at 3-187 (RIDVIDNHGQ…LSVCDQQSVA (185 aa)) folds into the Glutamine amidotransferase type-1 domain. The active-site Nucleophile is the cysteine 73. Residues histidine 161 and glutamate 163 contribute to the active site.

In terms of assembly, heterodimer composed of a glutamine amidotransferase subunit (A) and a GMP-binding subunit (B).

It catalyses the reaction XMP + L-glutamine + ATP + H2O = GMP + L-glutamate + AMP + diphosphate + 2 H(+). It functions in the pathway purine metabolism; GMP biosynthesis; GMP from XMP (L-Gln route): step 1/1. Catalyzes the synthesis of GMP from XMP. The polypeptide is GMP synthase [glutamine-hydrolyzing] subunit A (Haloarcula marismortui (strain ATCC 43049 / DSM 3752 / JCM 8966 / VKM B-1809) (Halobacterium marismortui)).